The primary structure comprises 109 residues: ATPase inhibitor mai-2, mitochondrial (109 aa).

Disordered stretches follow at residues 17–39 (RFST…SIRD) and 73–95 (QEVD…HQKR). Residues 21-35 (GGHGDGAGRGGGSGG) show a composition bias toward gly residues. The stretch at 45-109 (GKMEAAREDE…EAEERALGKE (65 aa)) forms a coiled coil.

The protein belongs to the ATPase inhibitor family.

The protein localises to the mitochondrion. In terms of biological role, thought to be a regulatory component of the ATP-synthesizing complex in the mitochondria. The sequence is that of ATPase inhibitor mai-2, mitochondrial from Caenorhabditis briggsae.